The following is an 806-amino-acid chain: Protein translocase subunit SecA (806 aa).

ATP is bound by residues Gln87, Gly105 to Thr109, and Asp493.

The protein belongs to the SecA family. Monomer and homodimer. Part of the essential Sec protein translocation apparatus which comprises SecA, SecYEG and auxiliary proteins SecDF. Other proteins may also be involved.

The protein localises to the cell membrane. It is found in the cytoplasm. It carries out the reaction ATP + H2O + cellular proteinSide 1 = ADP + phosphate + cellular proteinSide 2.. Part of the Sec protein translocase complex. Interacts with the SecYEG preprotein conducting channel. Has a central role in coupling the hydrolysis of ATP to the transfer of proteins into and across the cell membrane, serving as an ATP-driven molecular motor driving the stepwise translocation of polypeptide chains across the membrane. The protein is Protein translocase subunit SecA of Mycoplasma genitalium (strain ATCC 33530 / DSM 19775 / NCTC 10195 / G37) (Mycoplasmoides genitalium).